The following is a 503-amino-acid chain: Maturase K (503 aa).

The protein belongs to the intron maturase 2 family. MatK subfamily.

The protein localises to the plastid. It localises to the chloroplast. Its function is as follows. Usually encoded in the trnK tRNA gene intron. Probably assists in splicing its own and other chloroplast group II introns. This chain is Maturase K, found in Vicia faba (Broad bean).